The sequence spans 311 residues: Ribonuclease HIII (311 aa).

The 217-residue stretch at Met-95–Lys-311 folds into the RNase H type-2 domain. A divalent metal cation-binding residues include Asp-101, Glu-102, and Asp-206.

Belongs to the RNase HII family. RnhC subfamily. Mn(2+) serves as cofactor. The cofactor is Mg(2+).

It localises to the cytoplasm. It catalyses the reaction Endonucleolytic cleavage to 5'-phosphomonoester.. In terms of biological role, endonuclease that specifically degrades the RNA of RNA-DNA hybrids. The protein is Ribonuclease HIII of Bacillus cereus (strain ZK / E33L).